The sequence spans 70 residues: Protein SlyX homolog (70 aa).

The protein belongs to the SlyX family.

This is Protein SlyX homolog from Shewanella frigidimarina (strain NCIMB 400).